A 236-amino-acid chain; its full sequence is uncharacterized protein (236 aa).

The 233-residue stretch at 4 to 236 folds into the GP-PDE domain; sequence QFLIAYRGYS…VKFQITAQIY (233 aa).

The protein to glycerophosphoryl diester phosphodiesterases (EC 3.1.4.46). This sequence to M.genitalium MG293.

This is an uncharacterized protein from Mycoplasma genitalium (strain ATCC 33530 / DSM 19775 / NCTC 10195 / G37) (Mycoplasmoides genitalium).